Consider the following 227-residue polypeptide: Phosphoglycolate phosphatase (227 aa).

Residue Asp-9 is the Nucleophile of the active site. 3 residues coordinate Mg(2+): Asp-9, Asp-11, and Asp-171.

This sequence belongs to the HAD-like hydrolase superfamily. CbbY/CbbZ/Gph/YieH family. Requires Mg(2+) as cofactor.

It catalyses the reaction 2-phosphoglycolate + H2O = glycolate + phosphate. The protein operates within organic acid metabolism; glycolate biosynthesis; glycolate from 2-phosphoglycolate: step 1/1. Its function is as follows. Specifically catalyzes the dephosphorylation of 2-phosphoglycolate. Is involved in the dissimilation of the intracellular 2-phosphoglycolate formed during the DNA repair of 3'-phosphoglycolate ends, a major class of DNA lesions induced by oxidative stress. The sequence is that of Phosphoglycolate phosphatase from Mesorhizobium japonicum (strain LMG 29417 / CECT 9101 / MAFF 303099) (Mesorhizobium loti (strain MAFF 303099)).